The primary structure comprises 854 residues: Cell division control protein 24 (854 aa).

A compositionally biased stretch (polar residues) spans 1–14; that stretch reads MAIQTRFASGTSLS. The segment at 1-24 is disordered; that stretch reads MAIQTRFASGTSLSDLKPKPSATS. Residues 135–246 form the Calponin-homology (CH) domain; the sequence is PNMEDTLLTF…VVETLMNSSP (112 aa). The DH domain occupies 278–454; that stretch reads EYVKIIKEFV…KNIARSINEN (177 aa). The PH domain occupies 478-668; that stretch reads RISKFGELLY…WSSCLQQLIH (191 aa). 2 disordered regions span residues 542 to 571 and 674 to 745; these read ISAS…SNNI and QFKA…FESE. Residues 682-707 are compositionally biased toward low complexity; the sequence is STSTTSSTAKSSSMMSPTTTMNTPNH. The 94-residue stretch at 761–854 folds into the PB1 domain; that stretch reads SILFRISYNN…NEKFLNIRLY (94 aa).

Interacts with AXL2.

In terms of biological role, promotes the exchange of CDC42-bound GDP by GTP. Controls the polarity of calmodulin, and the calcium regulatory process of bud emergence. CDC24 may be involved in the initial selection and organization of the budding site. The sequence is that of Cell division control protein 24 (CDC24) from Saccharomyces cerevisiae (strain ATCC 204508 / S288c) (Baker's yeast).